We begin with the raw amino-acid sequence, 253 residues long: Imidazole glycerol phosphate synthase subunit HisF (253 aa).

Residues aspartate 11 and aspartate 130 contribute to the active site.

This sequence belongs to the HisA/HisF family. In terms of assembly, heterodimer of HisH and HisF.

It localises to the cytoplasm. It catalyses the reaction 5-[(5-phospho-1-deoxy-D-ribulos-1-ylimino)methylamino]-1-(5-phospho-beta-D-ribosyl)imidazole-4-carboxamide + L-glutamine = D-erythro-1-(imidazol-4-yl)glycerol 3-phosphate + 5-amino-1-(5-phospho-beta-D-ribosyl)imidazole-4-carboxamide + L-glutamate + H(+). It functions in the pathway amino-acid biosynthesis; L-histidine biosynthesis; L-histidine from 5-phospho-alpha-D-ribose 1-diphosphate: step 5/9. Its function is as follows. IGPS catalyzes the conversion of PRFAR and glutamine to IGP, AICAR and glutamate. The HisF subunit catalyzes the cyclization activity that produces IGP and AICAR from PRFAR using the ammonia provided by the HisH subunit. This Opitutus terrae (strain DSM 11246 / JCM 15787 / PB90-1) protein is Imidazole glycerol phosphate synthase subunit HisF.